The sequence spans 236 residues: Flagellar L-ring protein (236 aa).

The signal sequence occupies residues 1 to 16 (MRMRITAILAAGLLAG). Cys-17 is lipidated: N-palmitoyl cysteine. Cys-17 carries the S-diacylglycerol cysteine lipid modification. The interval 96-143 (ENETDRSRKNSSGFNLGASGESQTSDFAWSGDLEYGSNTKTEGDGKTE) is disordered. Residues 105-122 (NSSGFNLGASGESQTSDF) are compositionally biased toward polar residues.

The protein belongs to the FlgH family. The basal body constitutes a major portion of the flagellar organelle and consists of four rings (L,P,S, and M) mounted on a central rod.

Its subcellular location is the cell outer membrane. The protein localises to the bacterial flagellum basal body. Assembles around the rod to form the L-ring and probably protects the motor/basal body from shearing forces during rotation. This Sinorhizobium medicae (strain WSM419) (Ensifer medicae) protein is Flagellar L-ring protein.